Here is a 140-residue protein sequence, read N- to C-terminus: MNNEHRFEIDGITYLMTPANAMAAWQSLKRAGVLLRGMDADALTNTQGAASVALGAILSHLGDPAVTEIEALVFEQTAIKTPDGTTYRLSPDRLNEHFNTRRTHLLRVLMEGVKYQYSDFFAGGMAAFQELIPMPSAEKQ.

This is an uncharacterized protein from Xylella fastidiosa (strain Temecula1 / ATCC 700964).